The primary structure comprises 444 residues: Deoxyguanosinetriphosphate triphosphohydrolase-like protein (444 aa).

Positions 1-26 (MIASPWHERRLNEDKKRRNDHRSPFQ) are disordered. Residues 59-250 (RLTHSLEVSQ…MELADDIAYA (192 aa)) enclose the HD domain.

Belongs to the dGTPase family. Type 2 subfamily.

The chain is Deoxyguanosinetriphosphate triphosphohydrolase-like protein from Shewanella woodyi (strain ATCC 51908 / MS32).